Consider the following 157-residue polypeptide: Transcription elongation factor GreA (157 aa).

The stretch at Leu-14 to Glu-37 forms a coiled coil.

Belongs to the GreA/GreB family.

Its function is as follows. Necessary for efficient RNA polymerase transcription elongation past template-encoded arresting sites. The arresting sites in DNA have the property of trapping a certain fraction of elongating RNA polymerases that pass through, resulting in locked ternary complexes. Cleavage of the nascent transcript by cleavage factors such as GreA or GreB allows the resumption of elongation from the new 3'terminus. GreA releases sequences of 2 to 3 nucleotides. This is Transcription elongation factor GreA from Vibrio vulnificus (strain CMCP6).